We begin with the raw amino-acid sequence, 222 residues long: Protein GrpE (222 aa).

Belongs to the GrpE family. Homodimer.

It is found in the cytoplasm. Participates actively in the response to hyperosmotic and heat shock by preventing the aggregation of stress-denatured proteins, in association with DnaK and GrpE. It is the nucleotide exchange factor for DnaK and may function as a thermosensor. Unfolded proteins bind initially to DnaJ; upon interaction with the DnaJ-bound protein, DnaK hydrolyzes its bound ATP, resulting in the formation of a stable complex. GrpE releases ADP from DnaK; ATP binding to DnaK triggers the release of the substrate protein, thus completing the reaction cycle. Several rounds of ATP-dependent interactions between DnaJ, DnaK and GrpE are required for fully efficient folding. This Bartonella bacilliformis (strain ATCC 35685 / KC583 / Herrer 020/F12,63) protein is Protein GrpE.